Reading from the N-terminus, the 466-residue chain is Asparagine--tRNA ligase (466 aa).

Belongs to the class-II aminoacyl-tRNA synthetase family. Homodimer.

Its subcellular location is the cytoplasm. It catalyses the reaction tRNA(Asn) + L-asparagine + ATP = L-asparaginyl-tRNA(Asn) + AMP + diphosphate + H(+). The sequence is that of Asparagine--tRNA ligase from Shewanella frigidimarina (strain NCIMB 400).